A 239-amino-acid polypeptide reads, in one-letter code: Ribonuclease PH (239 aa).

Residues Arg86 and 124–126 each bind phosphate; that span reads GTR.

The protein belongs to the RNase PH family. As to quaternary structure, homohexameric ring arranged as a trimer of dimers.

It catalyses the reaction tRNA(n+1) + phosphate = tRNA(n) + a ribonucleoside 5'-diphosphate. Functionally, phosphorolytic 3'-5' exoribonuclease that plays an important role in tRNA 3'-end maturation. Removes nucleotide residues following the 3'-CCA terminus of tRNAs; can also add nucleotides to the ends of RNA molecules by using nucleoside diphosphates as substrates, but this may not be physiologically important. Probably plays a role in initiation of 16S rRNA degradation (leading to ribosome degradation) during starvation. In Anaeromyxobacter dehalogenans (strain 2CP-C), this protein is Ribonuclease PH.